The sequence spans 355 residues: Holliday junction branch migration complex subunit RuvB (355 aa).

A disordered region spans residues 1–26 (MSIQTDDFASSSPAARRVVSTAPASP). A large ATPase domain (RuvB-L) region spans residues 5 to 196 (TDDFASSSPA…FGIVARLEFY (192 aa)). Residues 9–22 (ASSSPAARRVVSTA) show a composition bias toward low complexity. Residues Leu-35, Arg-36, Gly-77, Lys-80, Thr-81, Thr-82, 143-145 (EDY), Arg-186, Tyr-196, and Arg-233 contribute to the ATP site. Thr-81 lines the Mg(2+) pocket. Residues 197-267 (SVEELARIVT…IADKALAMLD (71 aa)) form a small ATPAse domain (RuvB-S) region. The segment at 270-355 (PQGFDVMDRK…TTSGSELFDA (86 aa)) is head domain (RuvB-H). 2 residues coordinate DNA: Arg-325 and Arg-330.

It belongs to the RuvB family. As to quaternary structure, homohexamer. Forms an RuvA(8)-RuvB(12)-Holliday junction (HJ) complex. HJ DNA is sandwiched between 2 RuvA tetramers; dsDNA enters through RuvA and exits via RuvB. An RuvB hexamer assembles on each DNA strand where it exits the tetramer. Each RuvB hexamer is contacted by two RuvA subunits (via domain III) on 2 adjacent RuvB subunits; this complex drives branch migration. In the full resolvosome a probable DNA-RuvA(4)-RuvB(12)-RuvC(2) complex forms which resolves the HJ.

The protein resides in the cytoplasm. It carries out the reaction ATP + H2O = ADP + phosphate + H(+). The RuvA-RuvB-RuvC complex processes Holliday junction (HJ) DNA during genetic recombination and DNA repair, while the RuvA-RuvB complex plays an important role in the rescue of blocked DNA replication forks via replication fork reversal (RFR). RuvA specifically binds to HJ cruciform DNA, conferring on it an open structure. The RuvB hexamer acts as an ATP-dependent pump, pulling dsDNA into and through the RuvAB complex. RuvB forms 2 homohexamers on either side of HJ DNA bound by 1 or 2 RuvA tetramers; 4 subunits per hexamer contact DNA at a time. Coordinated motions by a converter formed by DNA-disengaged RuvB subunits stimulates ATP hydrolysis and nucleotide exchange. Immobilization of the converter enables RuvB to convert the ATP-contained energy into a lever motion, pulling 2 nucleotides of DNA out of the RuvA tetramer per ATP hydrolyzed, thus driving DNA branch migration. The RuvB motors rotate together with the DNA substrate, which together with the progressing nucleotide cycle form the mechanistic basis for DNA recombination by continuous HJ branch migration. Branch migration allows RuvC to scan DNA until it finds its consensus sequence, where it cleaves and resolves cruciform DNA. The sequence is that of Holliday junction branch migration complex subunit RuvB from Methylibium petroleiphilum (strain ATCC BAA-1232 / LMG 22953 / PM1).